We begin with the raw amino-acid sequence, 373 residues long: Anhydro-N-acetylmuramic acid kinase (373 aa).

Residue 12–19 (GTSLDGVD) coordinates ATP.

Belongs to the anhydro-N-acetylmuramic acid kinase family.

It catalyses the reaction 1,6-anhydro-N-acetyl-beta-muramate + ATP + H2O = N-acetyl-D-muramate 6-phosphate + ADP + H(+). Its pathway is amino-sugar metabolism; 1,6-anhydro-N-acetylmuramate degradation. The protein operates within cell wall biogenesis; peptidoglycan recycling. In terms of biological role, catalyzes the specific phosphorylation of 1,6-anhydro-N-acetylmuramic acid (anhMurNAc) with the simultaneous cleavage of the 1,6-anhydro ring, generating MurNAc-6-P. Is required for the utilization of anhMurNAc either imported from the medium or derived from its own cell wall murein, and thus plays a role in cell wall recycling. This is Anhydro-N-acetylmuramic acid kinase from Erwinia tasmaniensis (strain DSM 17950 / CFBP 7177 / CIP 109463 / NCPPB 4357 / Et1/99).